The primary structure comprises 384 residues: Putative odorant receptor 98b (384 aa).

Residues 1-34 (MLTDKFLRLQSALFRLLGLELLHEQDVGHRYPWR) are Cytoplasmic-facing. A helical transmembrane segment spans residues 35–55 (SICCILSVASFMPLTIAFGLQ). Residues 56–66 (NVQNVEQLTDS) are Extracellular-facing. Residues 67-87 (LCSVLVDLLALCKIGLFLWLY) traverse the membrane as a helical segment. Residues 88–128 (KDFKFLIGQFYCVLQTETHTAVAEMIVTRESRRDQFISAMY) are Cytoplasmic-facing. The chain crosses the membrane as a helical span at residues 129 to 149 (AYCFITAGLSACLMSPLSMLI). The Extracellular portion of the chain corresponds to 150–177 (SYQRTGELQPKFPFPSVYPWDNMKLSNY). A helical membrane pass occupies residues 178–198 (IISYFWNVCAALGVALPTVCV). Topologically, residues 199 to 258 (DTLFCSLSHNLCALFQIARHKMMHFEGRNTKETHENLKHVFQLYALCLNLGHFLNEYFRP) are cytoplasmic. A helical transmembrane segment spans residues 259–279 (LICQFVAASLHLCVLCYQLSA). Residues 280–284 (NILQP) lie on the Extracellular side of the membrane. A helical membrane pass occupies residues 285-305 (ALLFYAAFTAAVVGQVSIYCF). Topologically, residues 306–329 (CGSSIHSECQLFGQAIYESSWPHL) are cytoplasmic. The helical transmembrane segment at 330-350 (LQENLQLVSSLKIAMMRSSLG) threads the bilayer. The Extracellular segment spans residues 351 to 384 (CPIDGYFFEANRETLITVSKAFIKVSKKTPQVND).

This sequence belongs to the insect chemoreceptor superfamily. Heteromeric odorant receptor channel (TC 1.A.69) family. Or1a subfamily. Interacts with Orco. Complexes exist early in the endomembrane system in olfactory sensory neurons (OSNs), coupling these complexes to the conserved ciliary trafficking pathway.

The protein resides in the cell membrane. Its function is as follows. Odorant receptor which mediates acceptance or avoidance behavior, depending on its substrates. The odorant receptor repertoire encodes a large collection of odor stimuli that vary widely in identity, intensity, and duration. May form a complex with Orco to form odorant-sensing units, providing sensitive and prolonged odorant signaling and calcium permeability. The protein is Putative odorant receptor 98b (Or98b) of Drosophila melanogaster (Fruit fly).